The following is a 340-amino-acid chain: Protein FAM50A-A (340 aa).

2 disordered regions span residues 1–22 and 123–178; these read MAQYKGAASEAGRAMQLMKKRE and NLEE…EEEN. The segment covering 124–146 has biased composition (acidic residues); the sequence is LEEDEECEDEEGEEEESDKEDPP. A compositionally biased stretch (basic and acidic residues) spans 169–178; it reads PDRDREEEEN.

It localises to the nucleus. In terms of biological role, probably involved in the regulation of pre-mRNA splicing. In Xenopus laevis (African clawed frog), this protein is Protein FAM50A-A (fam50a-a).